The chain runs to 21 residues: uncharacterized protein (21 aa).

This is an uncharacterized protein from Escherichia coli (strain K12).